A 104-amino-acid polypeptide reads, in one-letter code: DNA-directed RNA polymerase subunit omega (104 aa).

Residues 60–104 are disordered; it reads VIHPDPEGKREAVRRRAEEERLRKEEEERKIKEQIAKEKEEGEKI. Residues 63-104 show a composition bias toward basic and acidic residues; it reads PDPEGKREAVRRRAEEERLRKEEEERKIKEQIAKEKEEGEKI.

This sequence belongs to the RNA polymerase subunit omega family. In terms of assembly, the RNAP catalytic core consists of 2 alpha, 1 beta, 1 beta' and 1 omega subunit. When a sigma factor is associated with the core the holoenzyme is formed, which can initiate transcription.

The enzyme catalyses RNA(n) + a ribonucleoside 5'-triphosphate = RNA(n+1) + diphosphate. Its function is as follows. Promotes RNA polymerase assembly. Latches the N- and C-terminal regions of the beta' subunit thereby facilitating its interaction with the beta and alpha subunits. The chain is DNA-directed RNA polymerase subunit omega from Streptococcus sanguinis (strain SK36).